The primary structure comprises 325 residues: Pseudouridylate synthase TRUB2, mitochondrial (325 aa).

The active-site Nucleophile is Asp-101. A disordered region spans residues 292-325; that stretch reads QTEGVSRGNPDREAAEGPIPGPSRGAEGEGELRA.

It belongs to the pseudouridine synthase TruB family.

The protein localises to the mitochondrion matrix. The catalysed reaction is a uridine in mRNA = a pseudouridine in mRNA. It carries out the reaction uridine(55) in tRNA = pseudouridine(55) in tRNA. Functionally, minor enzyme contributing to the isomerization of uridine to pseudouridine (pseudouridylation) of specific mitochondrial mRNAs (mt-mRNAs) such as COXI and COXIII mt-mRNAs, modulating the efficiency of mitochondrial protein synthesis without changes in transcript abundance or stability. Also catalyzes pseudouridylation of some tRNAs, including synthesis of pseudouridine(55) from uracil-55, in the psi GC loop of a subset of tRNAs. The polypeptide is Pseudouridylate synthase TRUB2, mitochondrial (Xenopus tropicalis (Western clawed frog)).